The sequence spans 227 residues: Cytochrome c oxidase subunit 2 (227 aa).

The Mitochondrial intermembrane segment spans residues 1-14; sequence MAYPFQLGLQDATS. A helical membrane pass occupies residues 15 to 45; that stretch reads PIMEELLHFHDHTLMIVFLISSLVLYIISLM. Over 46 to 59 the chain is Mitochondrial matrix; that stretch reads LTTKLTHTSTMDAQ. Residues 60–87 form a helical membrane-spanning segment; that stretch reads EVETVWTILPAIILILIALPSLRILYMM. Residues 88-227 lie on the Mitochondrial intermembrane side of the membrane; sequence DEINNPSLTV…YFETWSALMV (140 aa). Cu cation contacts are provided by His161, Cys196, Glu198, Cys200, His204, and Met207. Glu198 provides a ligand contact to Mg(2+). A Phosphotyrosine modification is found at Tyr218.

This sequence belongs to the cytochrome c oxidase subunit 2 family. As to quaternary structure, component of the cytochrome c oxidase (complex IV, CIV), a multisubunit enzyme composed of 14 subunits. The complex is composed of a catalytic core of 3 subunits MT-CO1, MT-CO2 and MT-CO3, encoded in the mitochondrial DNA, and 11 supernumerary subunits COX4I, COX5A, COX5B, COX6A, COX6B, COX6C, COX7A, COX7B, COX7C, COX8 and NDUFA4, which are encoded in the nuclear genome. The complex exists as a monomer or a dimer and forms supercomplexes (SCs) in the inner mitochondrial membrane with NADH-ubiquinone oxidoreductase (complex I, CI) and ubiquinol-cytochrome c oxidoreductase (cytochrome b-c1 complex, complex III, CIII), resulting in different assemblies (supercomplex SCI(1)III(2)IV(1) and megacomplex MCI(2)III(2)IV(2)). Found in a complex with TMEM177, COA6, COX18, COX20, SCO1 and SCO2. Interacts with TMEM177 in a COX20-dependent manner. Interacts with COX20. Interacts with COX16. The cofactor is Cu cation.

The protein resides in the mitochondrion inner membrane. The catalysed reaction is 4 Fe(II)-[cytochrome c] + O2 + 8 H(+)(in) = 4 Fe(III)-[cytochrome c] + 2 H2O + 4 H(+)(out). Functionally, component of the cytochrome c oxidase, the last enzyme in the mitochondrial electron transport chain which drives oxidative phosphorylation. The respiratory chain contains 3 multisubunit complexes succinate dehydrogenase (complex II, CII), ubiquinol-cytochrome c oxidoreductase (cytochrome b-c1 complex, complex III, CIII) and cytochrome c oxidase (complex IV, CIV), that cooperate to transfer electrons derived from NADH and succinate to molecular oxygen, creating an electrochemical gradient over the inner membrane that drives transmembrane transport and the ATP synthase. Cytochrome c oxidase is the component of the respiratory chain that catalyzes the reduction of oxygen to water. Electrons originating from reduced cytochrome c in the intermembrane space (IMS) are transferred via the dinuclear copper A center (CU(A)) of subunit 2 and heme A of subunit 1 to the active site in subunit 1, a binuclear center (BNC) formed by heme A3 and copper B (CU(B)). The BNC reduces molecular oxygen to 2 water molecules using 4 electrons from cytochrome c in the IMS and 4 protons from the mitochondrial matrix. The protein is Cytochrome c oxidase subunit 2 (MT-CO2) of Canis adustus (Side-striped jackal).